The chain runs to 457 residues: Siroheme synthase (457 aa).

The segment at 1 to 204 (MDHLPIFCQL…ADEKAVNATT (204 aa)) is precorrin-2 dehydrogenase /sirohydrochlorin ferrochelatase. Residues 22-23 (DV) and 43-44 (LT) each bind NAD(+). Ser128 carries the phosphoserine modification. The tract at residues 216 to 457 (GEVVLVGAGP…RDKLNWFSNY (242 aa)) is uroporphyrinogen-III C-methyltransferase. Residue Pro225 coordinates S-adenosyl-L-methionine. Catalysis depends on Asp248, which acts as the Proton acceptor. Lys270 acts as the Proton donor in catalysis. S-adenosyl-L-methionine-binding positions include 301–303 (GGD), Ile306, 331–332 (TA), Met382, and Gly411.

It in the N-terminal section; belongs to the precorrin-2 dehydrogenase / sirohydrochlorin ferrochelatase family. In the C-terminal section; belongs to the precorrin methyltransferase family.

It carries out the reaction uroporphyrinogen III + 2 S-adenosyl-L-methionine = precorrin-2 + 2 S-adenosyl-L-homocysteine + H(+). It catalyses the reaction precorrin-2 + NAD(+) = sirohydrochlorin + NADH + 2 H(+). The enzyme catalyses siroheme + 2 H(+) = sirohydrochlorin + Fe(2+). The protein operates within cofactor biosynthesis; adenosylcobalamin biosynthesis; precorrin-2 from uroporphyrinogen III: step 1/1. Its pathway is cofactor biosynthesis; adenosylcobalamin biosynthesis; sirohydrochlorin from precorrin-2: step 1/1. It functions in the pathway porphyrin-containing compound metabolism; siroheme biosynthesis; precorrin-2 from uroporphyrinogen III: step 1/1. It participates in porphyrin-containing compound metabolism; siroheme biosynthesis; siroheme from sirohydrochlorin: step 1/1. The protein operates within porphyrin-containing compound metabolism; siroheme biosynthesis; sirohydrochlorin from precorrin-2: step 1/1. Its function is as follows. Multifunctional enzyme that catalyzes the SAM-dependent methylations of uroporphyrinogen III at position C-2 and C-7 to form precorrin-2 via precorrin-1. Then it catalyzes the NAD-dependent ring dehydrogenation of precorrin-2 to yield sirohydrochlorin. Finally, it catalyzes the ferrochelation of sirohydrochlorin to yield siroheme. The polypeptide is Siroheme synthase (Salmonella dublin (strain CT_02021853)).